The chain runs to 88 residues: Elongation factor 1-beta (88 aa).

The protein belongs to the EF-1-beta/EF-1-delta family.

Its function is as follows. Promotes the exchange of GDP for GTP in EF-1-alpha/GDP, thus allowing the regeneration of EF-1-alpha/GTP that could then be used to form the ternary complex EF-1-alpha/GTP/AAtRNA. The chain is Elongation factor 1-beta from Halorubrum lacusprofundi (strain ATCC 49239 / DSM 5036 / JCM 8891 / ACAM 34).